Here is a 300-residue protein sequence, read N- to C-terminus: Actin-related protein 2/3 complex subunit 2-B (300 aa).

The protein belongs to the ARPC2 family. In terms of assembly, component of the Arp2/3 complex composed of actr2/arp2, actr3/arp3, arpc1 (arpc1a or arpc1b), arpc2, arpc3, arpc4 and arpc5.

The protein localises to the cytoplasm. The protein resides in the cytoskeleton. It is found in the cell projection. Its subcellular location is the nucleus. Functionally, actin-binding component of the Arp2/3 complex, a multiprotein complex that mediates actin polymerization upon stimulation by nucleation-promoting factor (NPF). The Arp2/3 complex mediates the formation of branched actin networks in the cytoplasm, providing the force for cell motility. In addition to its role in the cytoplasmic cytoskeleton, the Arp2/3 complex also promotes actin polymerization in the nucleus, thereby regulating gene transcription and repair of damaged DNA. The Arp2/3 complex promotes homologous recombination (HR) repair in response to DNA damage by promoting nuclear actin polymerization, leading to drive motility of double-strand breaks (DSBs). This is Actin-related protein 2/3 complex subunit 2-B (arpc2-b) from Xenopus laevis (African clawed frog).